The chain runs to 492 residues: Histone-lysine N-methyltransferase ASHH1 (492 aa).

The AWS domain occupies 36–87 (EDISICECKFDFGDPDSACGERCLNVITNTECTPGYCPCGVYCKNQKFQKCE). In terms of domain architecture, SET spans 84–206 (QKCEYAKTKL…PRTELAYDYN (123 aa)). Residues 213–229 (AKVRCLCGAVACSGFLG) form the Post-SET domain. Residues 259-340 (SAEDELTSEP…NSQEDSSPKT (82 aa)) are disordered. Residues 266–275 (SEPSKNGESN) are compositionally biased toward polar residues. The segment covering 277-290 (NEEKEKDISTENHL) has biased composition (basic and acidic residues). Residues 291–306 (ESTALNIQQQSDSTPT) are compositionally biased toward polar residues. Over residues 317-326 (VKTETSEDMK) the composition is skewed to basic and acidic residues. A compositionally biased stretch (polar residues) spans 328–339 (LSQNSQEDSSPK).

Belongs to the class V-like SAM-binding methyltransferase superfamily. Histone-lysine methyltransferase family. SET2 subfamily.

The protein localises to the nucleus. The protein resides in the chromosome. It localises to the centromere. It carries out the reaction L-lysyl(4)-[histone H3] + 3 S-adenosyl-L-methionine = N(6),N(6),N(6)-trimethyl-L-lysyl(4)-[histone H3] + 3 S-adenosyl-L-homocysteine + 3 H(+). Histone methyltransferase involved in regulation of flowering time. Required for the expression of the SOC1/AGL20 gene. Required for histone H3 trimethylation on 'Lys-4' (H3K4me3) at the SOC1 locus. Prevents trimethylation on 'Lys-27' (H3K27me3) at the same locus. The polypeptide is Histone-lysine N-methyltransferase ASHH1 (ASHH1) (Arabidopsis thaliana (Mouse-ear cress)).